Consider the following 214-residue polypeptide: Adenylate kinase (214 aa).

10 to 15 contributes to the ATP binding site; it reads GAGKGT. Positions 30–59 are NMP; the sequence is STGDMLRAAVKAGTPLGLEAKKVMDAGQLV. AMP is bound by residues Thr31, Arg36, 57–59, 85–88, and Gln92; these read QLV and GFPR. The LID stretch occupies residues 122–159; sequence GRRVHPGSGRVYHVVFNPPKVEGKDDVTGEDLAIRPDD. ATP-binding positions include Arg123 and 132–133; that span reads VY. Arg156 and Arg167 together coordinate AMP. Gln200 is an ATP binding site.

The protein belongs to the adenylate kinase family. As to quaternary structure, monomer.

The protein resides in the cytoplasm. The enzyme catalyses AMP + ATP = 2 ADP. The protein operates within purine metabolism; AMP biosynthesis via salvage pathway; AMP from ADP: step 1/1. Functionally, catalyzes the reversible transfer of the terminal phosphate group between ATP and AMP. Plays an important role in cellular energy homeostasis and in adenine nucleotide metabolism. In Shewanella sp. (strain ANA-3), this protein is Adenylate kinase.